Here is a 350-residue protein sequence, read N- to C-terminus: tRNA-splicing endonuclease (350 aa).

Catalysis depends on residues Tyr286, His297, and Lys328.

This sequence belongs to the tRNA-intron endonuclease family. Archaeal long subfamily. Homodimer.

It carries out the reaction pretRNA = a 3'-half-tRNA molecule with a 5'-OH end + a 5'-half-tRNA molecule with a 2',3'-cyclic phosphate end + an intron with a 2',3'-cyclic phosphate and a 5'-hydroxyl terminus.. Endonuclease that removes tRNA introns. Cleaves pre-tRNA at the 5'- and 3'-splice sites to release the intron. The products are an intron and two tRNA half-molecules bearing 2',3' cyclic phosphate and 5'-OH termini. Recognizes a pseudosymmetric substrate in which 2 bulged loops of 3 bases are separated by a stem of 4 bp. This is tRNA-splicing endonuclease from Methanosarcina acetivorans (strain ATCC 35395 / DSM 2834 / JCM 12185 / C2A).